The following is a 349-amino-acid chain: tRNA pseudouridine synthase D (349 aa).

Phe27 contributes to the substrate binding site. Catalysis depends on Asp80, which acts as the Nucleophile. Position 129 (Asn129) interacts with substrate. The TRUD domain occupies 155–303 (GVPNYFGAQR…VEAARRAMLL (149 aa)). Phe329 serves as a coordination point for substrate.

This sequence belongs to the pseudouridine synthase TruD family.

It carries out the reaction uridine(13) in tRNA = pseudouridine(13) in tRNA. Responsible for synthesis of pseudouridine from uracil-13 in transfer RNAs. The polypeptide is tRNA pseudouridine synthase D (Shigella dysenteriae serotype 1 (strain Sd197)).